The following is a 37-amino-acid chain: Cytochrome b6-f complex subunit 5 (37 aa).

A helical transmembrane segment spans residues 5–25 (LLSGIVLGLIPITLVGLFVTA).

This sequence belongs to the PetG family. In terms of assembly, the 4 large subunits of the cytochrome b6-f complex are cytochrome b6, subunit IV (17 kDa polypeptide, PetD), cytochrome f and the Rieske protein, while the 4 small subunits are PetG, PetL, PetM and PetN. The complex functions as a dimer.

The protein localises to the plastid. Its subcellular location is the chloroplast thylakoid membrane. Functionally, component of the cytochrome b6-f complex, which mediates electron transfer between photosystem II (PSII) and photosystem I (PSI), cyclic electron flow around PSI, and state transitions. PetG is required for either the stability or assembly of the cytochrome b6-f complex. The protein is Cytochrome b6-f complex subunit 5 of Welwitschia mirabilis (Tree tumbo).